A 1056-amino-acid chain; its full sequence is PAX-interacting protein 1 (1056 aa).

BRCT domains are found at residues 8–93 (VPEE…GFSP) and 94–183 (ESCQ…FYHP). Residues 94–183 (ESCQIFFGLT…RRKDEAFYHP (90 aa)) form an interaction with PAGR1 region. The span at 188-205 (YEEEEEEEEEGDNEEQDS) shows a compositional bias: acidic residues. Disordered stretches follow at residues 188–276 (YEEE…QRRL), 393–412 (THVLQQHHPPQQPQQQHPAL), and 419–486 (MQLQ…FQQQ). A compositionally biased stretch (low complexity) spans 214-223 (SSVASSAVAS). Ser223 and Ser230 each carry phosphoserine. 3 stretches are compositionally biased toward low complexity: residues 396-412 (LQQHHPPQQPQQQHPAL), 419-435 (MQLQQQQQQQQQQQQQP), and 445-486 (QFPQ…FQQQ). Positions 577–1056 (QLFGHDPAVE…TLDYESYKFN (480 aa)) are interaction with TP53BP1. BRCT domains follow at residues 588–681 (PEES…RALH), 688–776 (PGGK…VQYS), 853–934 (TPLV…NYIL), and 955–989 (HVSPLFKTKYFYITPGICPSLATMKAIVECAGGKV). The Nuclear localization signal motif lies at 655–672 (RKRCVTAHWLNTVLKKKK).

In terms of assembly, interacts with the C-terminal transactivation domain of PAX2. Forms a constitutive complex with PAGR1 independently of the MLL2/MLL3 complex. Interacts with TP53BP1 (when phosphorylated at the N-terminus by ATM). Interacts with HLTF. Component of the KMT2 family MLL2/MLL3 complex (also named ASCOM complex), at least composed of the HMTs KMT2D and/or KMT2C, the common subunits ASH2L, RBBP5, WDR5 and DPY30, and the complex type-specific subunits PAXIP1/PTIP, PAGR1, NCOA6 and KDM6A; required for the association of PAGR1 with the MLL2/MLL3 complex. Interacts with NUPR1; this interaction prevents PAXIP1 inhibition of PAX2 transcription factor activity. In terms of tissue distribution, expression detected in all tissues examined, including brain stem, cerebellum, cortex, heart, spleen, kidney, liver, thymus and lung.

Its subcellular location is the nucleus matrix. The protein resides in the chromosome. Its function is as follows. Involved in DNA damage response and in transcriptional regulation through histone methyltransferase (HMT) complexes such as the MLL2/MLL3 complex. Plays a role in early development. In DNA damage response is required for cell survival after ionizing radiation. In vitro shown to be involved in the homologous recombination mechanism for the repair of double-strand breaks (DSBs). Its localization to DNA damage foci requires Rnf8 and Ube2n. Recruits Tp53bp1 to DNA damage foci and, at least in particular repair processes, effective DNA damage response appears to require the association with Tp53bp1 phosphorylated by Atm. Together with Tp53bp1 regulates Atm association. Proposed to recruit Pagr1 to sites of DNA damage and the Pagr1:Paxip1 complex is required for cell survival in response to DNA damage independently of the MLL2/MLL3 complex. However, this function has been questioned. Promotes ubiquitination of PCNA following UV irradiation and may regulate recruitment of polymerase eta and Rad51 to chromatin after DNA damage. Proposed to be involved in transcriptional regulation by linking MLL-containing histone methyltransferase (HMT) complexes to gene promoters by interacting with promoter-bound transcription factors such as Pax2. Associates with gene promoters that are known to be regulated by Kmt2d/Mll2. During immunoglobulin class switching in activated B-cells is involved in trimethylation of histone H3 at 'Lys-4' and in transcription initiation of downstream switch regions at the immunoglobulin heavy-chain (Igh) locus; this function appears to involve the recruitment of MLL-containing HMT complexes. Conflictingly, its function in transcriptional regulation during immunoglobulin class switching is reported to be independent of the MLL2/MLL3 complex. The polypeptide is PAX-interacting protein 1 (Paxip1) (Mus musculus (Mouse)).